The following is a 306-amino-acid chain: Ubiquitin carboxyl-terminal hydrolase RPN11 (306 aa).

Met1 bears the N-acetylmethionine mark. A disordered region spans residues 1-20; it reads MERLQRLMMNSKVGSADTGR. An MPN domain is found at 27 to 162; the sequence is VYISSIALLK…IDAFRLIDTG (136 aa). 3 residues coordinate Zn(2+): His109, His111, and Asp122. The short motif at 109–122 is the JAMM motif element; it reads HSHPGFGCWLSSVD.

It belongs to the peptidase M67A family. Component of the lid subcomplex of the 19S proteasome regulatory particle complex (also named PA700 complex). The 26S proteasome consists of a 20S proteasome core and two 19S regulatory subunits. Interacts directly with RPN8 and STS1. Post-translationally, N-acetylated by NAT3.

The catalysed reaction is Thiol-dependent hydrolysis of ester, thioester, amide, peptide and isopeptide bonds formed by the C-terminal Gly of ubiquitin (a 76-residue protein attached to proteins as an intracellular targeting signal).. In terms of biological role, component of the lid subcomplex of the 26S proteasome, a multiprotein complex involved in the ATP-dependent degradation of ubiquitinated proteins. RPN11 is the only catalytically active member of the lid and serves as the essential deubiquitinase of the proteasome. This is Ubiquitin carboxyl-terminal hydrolase RPN11 (RPN11) from Saccharomyces cerevisiae (strain ATCC 204508 / S288c) (Baker's yeast).